Reading from the N-terminus, the 89-residue chain is Large ribosomal subunit protein bL28 (89 aa).

It belongs to the bacterial ribosomal protein bL28 family.

The polypeptide is Large ribosomal subunit protein bL28 (Chlamydia pneumoniae (Chlamydophila pneumoniae)).